We begin with the raw amino-acid sequence, 2999 residues long: TPR and ankyrin repeat-containing protein 1 (2999 aa).

Residues 1–87 (MASTTAGRRW…QPRGSTDSAC (87 aa)) form a disordered region. Low complexity predominate over residues 19–36 (RGPTPRSRAPGAKLSAPE). TPR repeat units lie at residues 144-177 (AMLL…DPTY) and 179-211 (KGYY…LQRS). ANK repeat units follow at residues 297–327 (EKYV…NIET), 328–361 (IGPN…EWKE), 369–405 (AGCT…DPTL), 538–567 (SQDR…DPRS), 572–593 (EGDT…DIGF), and 621–654 (NGNT…NFNL). Disordered regions lie at residues 684 to 722 (RRKN…LPCG), 773 to 831 (MPLP…GASQ), 1151 to 1211 (LEVE…GCVP), and 1318 to 1344 (WEED…QTGD). 2 stretches are compositionally biased toward polar residues: residues 699-717 (SRSS…TSFK) and 801-815 (TQRM…NNPV). Positions 1151 to 1164 (LEVEPGKEGPGREE) are enriched in basic and acidic residues. Residues 1318–1327 (WEEDDEEVEA) show a composition bias toward acidic residues. TPR repeat units follow at residues 1772–1805 (PYEW…EKEK) and 1866–1899 (LGKI…DLAL).

In terms of tissue distribution, expressed only in the brain. Detected in the hippocampus, hypothalamus and cingulate gyrus.

The protein is TPR and ankyrin repeat-containing protein 1 (Trank1) of Mus musculus (Mouse).